Consider the following 375-residue polypeptide: 23S rRNA (uracil(747)-C(5))-methyltransferase RlmC (375 aa).

The [4Fe-4S] cluster site is built by Cys3, Cys11, Cys14, and Cys87. Gln212, Phe241, Glu262, and Asn307 together coordinate S-adenosyl-L-methionine. Cys334 functions as the Nucleophile in the catalytic mechanism.

Belongs to the class I-like SAM-binding methyltransferase superfamily. RNA M5U methyltransferase family. RlmC subfamily.

It carries out the reaction uridine(747) in 23S rRNA + S-adenosyl-L-methionine = 5-methyluridine(747) in 23S rRNA + S-adenosyl-L-homocysteine + H(+). Catalyzes the formation of 5-methyl-uridine at position 747 (m5U747) in 23S rRNA. The protein is 23S rRNA (uracil(747)-C(5))-methyltransferase RlmC of Salmonella typhi.